Here is a 217-residue protein sequence, read N- to C-terminus: MRLRKKWWARPEIEASDKFADEPKELRGKWNKKFNNNNDIHLELGCGRGGFISQLVEKNKDINYVGIDLKDEVIVYAIRKVKEKEEEVKREFKNIKFITMNIMGIAEVFDKNEISKIYINFCNPWPKERHNKRRLTHTKLLTEYKKFIKPNTEIWFKTDDKELFEDSQEYFKESGFNIEYITYDLHNSDFKENIKTEYETKFETMGMKIMFLKARLL.

4 residues coordinate S-adenosyl-L-methionine: E43, D68, N101, and N123. K127 contacts substrate. An interaction with RNA region spans residues 129 to 134 (RHNKRR). Residues D159 and 196–199 (TEYE) contribute to the substrate site.

The protein belongs to the class I-like SAM-binding methyltransferase superfamily. TrmB family.

The catalysed reaction is guanosine(46) in tRNA + S-adenosyl-L-methionine = N(7)-methylguanosine(46) in tRNA + S-adenosyl-L-homocysteine. It functions in the pathway tRNA modification; N(7)-methylguanine-tRNA biosynthesis. Catalyzes the formation of N(7)-methylguanine at position 46 (m7G46) in tRNA. The protein is tRNA (guanine-N(7)-)-methyltransferase of Clostridium botulinum (strain 657 / Type Ba4).